The sequence spans 426 residues: Histidine--tRNA ligase (426 aa).

It belongs to the class-II aminoacyl-tRNA synthetase family.

Its subcellular location is the cytoplasm. The enzyme catalyses tRNA(His) + L-histidine + ATP = L-histidyl-tRNA(His) + AMP + diphosphate + H(+). The sequence is that of Histidine--tRNA ligase from Saccharolobus islandicus (strain Y.G.57.14 / Yellowstone #1) (Sulfolobus islandicus).